A 711-amino-acid chain; its full sequence is Polyribonucleotide nucleotidyltransferase (711 aa).

Residues aspartate 490 and aspartate 496 each coordinate Mg(2+). The KH domain occupies 557–616 (PRIETMQIPTDKIREVIGSGGKVIREIVETSGAKVDINDDGIIKIASANGEAIKKAYEMI). One can recognise an S1 motif domain in the interval 626–694 (GKVYTGTVVK…DRGKVRLSMK (69 aa)).

Belongs to the polyribonucleotide nucleotidyltransferase family. Mg(2+) is required as a cofactor.

It localises to the cytoplasm. The enzyme catalyses RNA(n+1) + phosphate = RNA(n) + a ribonucleoside 5'-diphosphate. Its function is as follows. Involved in mRNA degradation. Catalyzes the phosphorolysis of single-stranded polyribonucleotides processively in the 3'- to 5'-direction. In Dinoroseobacter shibae (strain DSM 16493 / NCIMB 14021 / DFL 12), this protein is Polyribonucleotide nucleotidyltransferase.